Here is a 185-residue protein sequence, read N- to C-terminus: Large ribosomal subunit protein uL15 (185 aa).

The interval 1 to 51 (MDLSSLRPAAGAVKNKKRVGRGQGSGNGTTAGKGNKGQQARSGYQKPINEG) is disordered. The span at 21–35 (RGQGSGNGTTAGKGN) shows a compositional bias: gly residues.

It belongs to the universal ribosomal protein uL15 family. As to quaternary structure, part of the 50S ribosomal subunit.

Its function is as follows. Binds to the 23S rRNA. The sequence is that of Large ribosomal subunit protein uL15 from Chlorobium phaeobacteroides (strain DSM 266 / SMG 266 / 2430).